The primary structure comprises 119 residues: UPF0102 protein GFO_3098 (119 aa).

Belongs to the UPF0102 family.

In Christiangramia forsetii (strain DSM 17595 / CGMCC 1.15422 / KT0803) (Gramella forsetii), this protein is UPF0102 protein GFO_3098.